The sequence spans 589 residues: Carbonic anhydrase (589 aa).

Alpha-carbonic anhydrase domains are found at residues His-59–Lys-316 and Asp-321–Asn-585. Substrate is bound at residue Thr-258–Thr-259. The segment at Met-390–Ala-589 is catalytic. Residues His-420, His-422, and His-440 each contribute to the Zn(2+) site.

This sequence belongs to the alpha-carbonic anhydrase family. Requires Zn(2+) as cofactor.

The catalysed reaction is hydrogencarbonate + H(+) = CO2 + H2O. In terms of biological role, reversible hydration of carbon dioxide. In Dunaliella salina (Green alga), this protein is Carbonic anhydrase (DCA).